A 196-amino-acid chain; its full sequence is Heat shock protein beta-8 (196 aa).

The interval 1 to 28 (MADGQLPFPCSYPSRLRRDPFRDSPLSS) is disordered. 2 positions are modified to phosphoserine: serine 24 and serine 57. A Phosphothreonine modification is found at threonine 63. Residues arginine 71 and arginine 78 each carry the asymmetric dimethylarginine modification. A sHSP domain is found at 78 to 185 (RFGVPAEGRS…PFGESSFNNE (108 aa)). Residue serine 87 is modified to Phosphoserine. The interval 176–196 (PFGESSFNNELPQDNQEVTCS) is disordered. Positions 178–196 (GESSFNNELPQDNQEVTCS) are enriched in polar residues.

It belongs to the small heat shock protein (HSP20) family. In terms of assembly, monomer. Forms a ternary complex with BAG3 and HSPA1A. Component of the chaperone-assisted selective autophagy (CASA) complex consisting of BAG3, HSPA8/HSC70, HSPB8 and STUB1/CHIP. Interacts with HSPB1. Interacts with DNAJB6. Interacts with BAG3. In terms of tissue distribution, highly expressed in skeletal muscle, heart, uterus, liver, lung and ovary. Low levels found in stomach and brain. Not detected in small intestine, large intestine, kidney, spleen and testis. In the ovary, expression is concentrated in the endometrium and in the connective tissue between the circular and longitudinal muscles of the myometrium.

The protein resides in the cytoplasm. The protein localises to the nucleus. In terms of biological role, involved in the chaperone-assisted selective autophagy (CASA), a crucial process for protein quality control, particularly in mechanical strained cells and tissues such as muscle. Displays temperature-dependent chaperone activity. The protein is Heat shock protein beta-8 (Hspb8) of Mus musculus (Mouse).